Reading from the N-terminus, the 246-residue chain is Acetylglutamate kinase (246 aa).

Residues 30-31 (GG), R52, and N151 contribute to the substrate site.

It belongs to the acetylglutamate kinase family. ArgB subfamily.

The protein localises to the cytoplasm. It carries out the reaction N-acetyl-L-glutamate + ATP = N-acetyl-L-glutamyl 5-phosphate + ADP. It participates in amino-acid biosynthesis; L-arginine biosynthesis; N(2)-acetyl-L-ornithine from L-glutamate: step 2/4. Catalyzes the ATP-dependent phosphorylation of N-acetyl-L-glutamate. This chain is Acetylglutamate kinase, found in Methanopyrus kandleri (strain AV19 / DSM 6324 / JCM 9639 / NBRC 100938).